The chain runs to 55 residues: Ribosome biogenesis protein Nop10 (55 aa).

The protein belongs to the NOP10 family.

Involved in ribosome biogenesis; more specifically in 18S rRNA pseudouridylation and in cleavage of pre-rRNA. The polypeptide is Ribosome biogenesis protein Nop10 (Methanosphaera stadtmanae (strain ATCC 43021 / DSM 3091 / JCM 11832 / MCB-3)).